The chain runs to 221 residues: Histone H1C (221 aa).

Low complexity-rich tracts occupy residues 1–11 (MTETAATETTP) and 27–44 (KKAA…PSAS). Disordered stretches follow at residues 1 to 44 (MTET…PSAS) and 123 to 221 (AKKK…AAKK). One can recognise an H15 domain in the interval 39-112 (SGPSASELIV…GASGSFKLNK (74 aa)). Basic residues-rich tracts occupy residues 123 to 150 (AKKK…KPKK) and 158 to 221 (SPKK…AAKK).

This sequence belongs to the histone H1/H5 family.

It is found in the nucleus. The protein resides in the chromosome. Histones H1 are necessary for the condensation of nucleosome chains into higher-order structures. The polypeptide is Histone H1C (Xenopus laevis (African clawed frog)).